Consider the following 360-residue polypeptide: S-adenosylmethionine:tRNA ribosyltransferase-isomerase (360 aa).

It belongs to the QueA family. As to quaternary structure, monomer.

It is found in the cytoplasm. The enzyme catalyses 7-aminomethyl-7-carbaguanosine(34) in tRNA + S-adenosyl-L-methionine = epoxyqueuosine(34) in tRNA + adenine + L-methionine + 2 H(+). It functions in the pathway tRNA modification; tRNA-queuosine biosynthesis. Transfers and isomerizes the ribose moiety from AdoMet to the 7-aminomethyl group of 7-deazaguanine (preQ1-tRNA) to give epoxyqueuosine (oQ-tRNA). The sequence is that of S-adenosylmethionine:tRNA ribosyltransferase-isomerase from Burkholderia pseudomallei (strain 1106a).